The chain runs to 38 residues: NAD-reducing hydrogenase HoxS subunit beta (38 aa).

Belongs to the [NiFe]/[NiFeSe] hydrogenase large subunit family. As to quaternary structure, tetramer of an alpha and a gamma subunits (flavin-containing dimer), and a delta and a nickel-containing beta subunits (hydrogenase dimer). It depends on FMN as a cofactor. Requires Ni(2+) as cofactor.

The protein localises to the cytoplasm. It carries out the reaction H2 + NAD(+) = NADH + H(+). In Rhodococcus opacus (Nocardia opaca), this protein is NAD-reducing hydrogenase HoxS subunit beta (hoxH).